A 141-amino-acid chain; its full sequence is Universal stress protein A homolog (141 aa).

The protein belongs to the universal stress protein A family. Homodimer.

It is found in the cytoplasm. Functionally, required for resistance to DNA-damaging agents. This Haemophilus influenzae (strain ATCC 51907 / DSM 11121 / KW20 / Rd) protein is Universal stress protein A homolog (uspA).